We begin with the raw amino-acid sequence, 302 residues long: Rab effector Noc2 (302 aa).

The region spanning glutamine 41–glycine 158 is the RabBD domain. The FYVE-type zinc finger occupies glycine 89–glutamate 146. 8 residues coordinate Zn(2+): cysteine 95, cysteine 98, cysteine 112, cysteine 115, cysteine 120, cysteine 123, cysteine 138, and cysteine 141. Disordered regions lie at residues aspartate 174–valine 194 and valine 206–tyrosine 302. Position 248 is a phosphoserine (serine 248). The segment covering serine 258–serine 269 has biased composition (low complexity).

In terms of assembly, recruited to dense-core vesicles through specific interaction with RAB27A in endocrine cells. Interacts with RAB3A, RAB3B, RAB3C and RAB3D. Interacts with ZYX. As to expression, highly expressed in pancreatic islets and parotid. High to moderate expression in adrenal gland, pituitary gland and ovary.

Its subcellular location is the cytoplasm. The protein resides in the cytoplasmic vesicle. It is found in the secretory vesicle membrane. Rab GTPase effector involved in the late steps of regulated exocytosis, both in endocrine and exocrine cells. Regulates the exocytosis of dense-core vesicles in neuroendocrine cells through interaction with RAB27A. Acts as a potential RAB3B effector protein in epithelial cells. In Rattus norvegicus (Rat), this protein is Rab effector Noc2 (Rph3al).